Here is a 387-residue protein sequence, read N- to C-terminus: F-box protein At5g41490 (387 aa).

The F-box domain maps to 2–47; that stretch reads ATMITNLRRDLIEEIISRVPLRSMKAVRLTCKSWNNISKSEIFTKM.

This chain is F-box protein At5g41490, found in Arabidopsis thaliana (Mouse-ear cress).